Consider the following 359-residue polypeptide: uncharacterized protein (359 aa).

The PINc domain maps to 163–275; sequence VVDTSCIIDG…SKVANLQKVQ (113 aa). Asp-165 and Asp-244 together coordinate Mg(2+). Positions 289-350 constitute a TRAM domain; that stretch reads IYLPGDSLEL…LQTSAGRMIF (62 aa).

This sequence belongs to the ycf81 family. The protein in the central section; belongs to the PINc/VapC protein family. Mg(2+) is required as a cofactor.

An RNase. This is an uncharacterized protein from Synechocystis sp. (strain ATCC 27184 / PCC 6803 / Kazusa).